The sequence spans 121 residues: Protein TusC (121 aa).

The protein belongs to the DsrF/TusC family. As to quaternary structure, heterohexamer, formed by a dimer of trimers. The hexameric TusBCD complex contains 2 copies each of TusB, TusC and TusD. The TusBCD complex interacts with TusE.

The protein localises to the cytoplasm. Its function is as follows. Part of a sulfur-relay system required for 2-thiolation of 5-methylaminomethyl-2-thiouridine (mnm(5)s(2)U) at tRNA wobble positions. The chain is Protein TusC from Yersinia enterocolitica serotype O:8 / biotype 1B (strain NCTC 13174 / 8081).